A 318-amino-acid chain; its full sequence is Molybdenum cofactor insertion chaperone PaoD (318 aa).

Homodimer in solution. Interacts with MocA.

Its function is as follows. Chaperone required for the production of an active PaoABC aldehyde oxidoreductase. Stabilizes the PaoC subunit and is required for the insertion of the molybdenum cofactor into this subunit. Binds molybdenum cofactor. Binds the molybdopterin cytosine dinucleotide (MCD) form of the cofactor after its formation by the molybdenum cofactor cytidylyltransferase MocA. The polypeptide is Molybdenum cofactor insertion chaperone PaoD (Escherichia coli (strain K12)).